The following is a 571-amino-acid chain: Glutamate--tRNA ligase (571 aa).

The 'HIGH' region motif lies at 110–120; that stretch reads PNPNGPATLGS.

The protein belongs to the class-I aminoacyl-tRNA synthetase family. Glutamate--tRNA ligase type 2 subfamily.

The protein resides in the cytoplasm. It carries out the reaction tRNA(Glu) + L-glutamate + ATP = L-glutamyl-tRNA(Glu) + AMP + diphosphate. Functionally, catalyzes the attachment of glutamate to tRNA(Glu) in a two-step reaction: glutamate is first activated by ATP to form Glu-AMP and then transferred to the acceptor end of tRNA(Glu). The protein is Glutamate--tRNA ligase of Methanosarcina barkeri (strain Fusaro / DSM 804).